The chain runs to 813 residues: Origin of replication complex subunit 1B (813 aa).

The interval 1–109 (MASTPRAKTF…TPKKKKKIDS (109 aa)) is disordered. Residues 11 to 21 (KSPTKTPSNIY) are compositionally biased toward polar residues. Residues 27-41 (SPSSTSHTPQTPETH) show a composition bias toward low complexity. The span at 43–52 (PLRRSARHVS) shows a compositional bias: basic residues. The Nuclear localization signal motif lies at 83 to 90 (PRKPTTDV). The segment at 163-187 (DPEIEDCQICFKSDTNIMIECDDCL) is histone H3 binding. The PHD-type zinc finger occupies 166-215 (IEDCQICFKSDTNIMIECDDCLGGFHLKCLKPPLKEVPEGDWICQFCEVK). Zn(2+) contacts are provided by cysteine 169, cysteine 172, cysteine 183, cysteine 186, histidine 191, and cysteine 194. The interval 203-207 (PEGDW) is histone H3 binding. Residues cysteine 209 and cysteine 212 each contribute to the Zn(2+) site. Residues 226–344 (PKPPEGKKLA…VHWRSFKRLA (119 aa)) enclose the BAH domain. The segment at 319–324 (ASNDGD) is histone H3 binding. The tract at residues 349 to 372 (GDSDSDQEWNGRKEEEVDDSDEEM) is disordered. The necessary and sufficient for ORC complex assembly stretch occupies residues 436 to 803 (PKSLPCRSKE…DDVAFALKDN (368 aa)). 471-479 (GVPGTGKTI) provides a ligand contact to ATP. Mg(2+) contacts are provided by aspartate 561 and glutamate 562. Residues glutamate 562, asparagine 595, and arginine 660 each contribute to the ATP site.

This sequence belongs to the ORC1 family. As to quaternary structure, component of the origin recognition complex (ORC) composed of at least ORC1 (ORC1A or ORC1B), ORC2, ORC3, ORC4, ORC5 and ORC6. ORC is regulated in a cell-cycle and development dependent manner. It is sequentially assembled at the exit from anaphase of mitosis and disassembled as cells enter S phase. Interacts directly with ORC2 and ORC5. Binds mostly unmodified histone H3, and, with lower efficiency, H3K4me1 H3K4me2 and H3K4me3. In terms of tissue distribution, follow a cell-cycle regulation with a peak at the G1/S-phase. Mostly expressed in flower buds, and, to a lower exent, in roots, leaves and stems.

The protein localises to the nucleus. In terms of biological role, essential protein required for ovules fertilization. Component of the origin recognition complex (ORC) that binds origins of replication. It has a role in both chromosomal replication and mating type transcriptional silencing. Binds to the ARS consensus sequence (ACS) of origins of replication. H3K4me3 effector that positively regulates the transcription of a subset of genes. This chain is Origin of replication complex subunit 1B, found in Arabidopsis thaliana (Mouse-ear cress).